Reading from the N-terminus, the 318-residue chain is Methionyl-tRNA formyltransferase (318 aa).

(6S)-5,6,7,8-tetrahydrofolate is bound at residue 117 to 120 (SLLP).

This sequence belongs to the Fmt family.

It catalyses the reaction L-methionyl-tRNA(fMet) + (6R)-10-formyltetrahydrofolate = N-formyl-L-methionyl-tRNA(fMet) + (6S)-5,6,7,8-tetrahydrofolate + H(+). Its function is as follows. Attaches a formyl group to the free amino group of methionyl-tRNA(fMet). The formyl group appears to play a dual role in the initiator identity of N-formylmethionyl-tRNA by promoting its recognition by IF2 and preventing the misappropriation of this tRNA by the elongation apparatus. This Malacoplasma penetrans (strain HF-2) (Mycoplasma penetrans) protein is Methionyl-tRNA formyltransferase.